Here is a 214-residue protein sequence, read N- to C-terminus: Large ribosomal subunit protein uL3 (214 aa).

The disordered stretch occupies residues 136–156; the sequence is THGNSLSHRAPGSIGQNQTPG. Position 153 is an N5-methylglutamine (Gln153).

It belongs to the universal ribosomal protein uL3 family. As to quaternary structure, part of the 50S ribosomal subunit. Forms a cluster with proteins L14 and L19. In terms of processing, methylated by PrmB.

In terms of biological role, one of the primary rRNA binding proteins, it binds directly near the 3'-end of the 23S rRNA, where it nucleates assembly of the 50S subunit. This chain is Large ribosomal subunit protein uL3, found in Thioalkalivibrio sulfidiphilus (strain HL-EbGR7).